The following is a 413-amino-acid chain: High zinc activated nuclear receptor protein (413 aa).

Residues leucine 11–leucine 86 constitute a DNA-binding region (nuclear receptor). 2 NR C4-type zinc fingers span residues cysteine 14–cysteine 34 and cysteine 50–cysteine 69. Residues serine 101 to asparagine 412 form a required for zinc-binding region. Residues glutamine 135–alanine 396 enclose the NR LBD domain.

The protein belongs to the nuclear hormone receptor family. Weakly expressed in intestinal cells in the absence of zinc supplementation. Upon zinc supplementation, accumulates in alimentary tract cells, and it is mainly expressed in the intestine.

The protein localises to the nucleus. It localises to the cytoplasm. Functionally, nuclear receptor transcription factor that binds to DNA enhancer elements to promote the transcription of genes required to maintain micronutrient homeostasis. Direct binding to its ligand zinc allows for nuclear accumulation and activation, which thereby induces the transcription of genes required to promote the storage and detoxification of excess dietary zinc. This in turn, allows for internal zinc levels to be detected and regulated. This chain is High zinc activated nuclear receptor protein, found in Caenorhabditis elegans.